A 213-amino-acid polypeptide reads, in one-letter code: Histone H1.1 (213 aa).

Positions 1 to 43 (MSETAPVAQAASTATEKPAAAKKTKKPAKAAAPRKKPAGPSVS) are disordered. An N-acetylserine modification is found at serine 2. Residues serine 2 and serine 12 each carry the phosphoserine modification. The segment covering 8-18 (AQAASTATEKP) has biased composition (low complexity). The residue at position 17 (lysine 17) is an N6-acetyllysine. Over residues 20–37 (AAKKTKKPAKAAAPRKKP) the composition is skewed to basic residues. N6-(beta-hydroxybutyryl)lysine is present on lysine 36. Residues 38 to 111 (AGPSVSELIV…GAAGSFKLNK (74 aa)) enclose the H15 domain. Phosphoserine is present on serine 43. Lysine 54 is modified (N6-(beta-hydroxybutyryl)lysine). Arginine 56 is subject to Citrulline. Lysine 66 carries the N6-(beta-hydroxybutyryl)lysine modification. Serine 67 is modified (phosphoserine). An N6-acetyllysine modification is found at lysine 77. Lysine 87 bears the N6-(beta-hydroxybutyryl)lysine mark. Lysine 92 carries the post-translational modification N6-(beta-hydroxybutyryl)lysine; alternate. The residue at position 92 (lysine 92) is an N6-acetyllysine; alternate. Serine 106 bears the Phosphoserine mark. Residue lysine 108 is modified to N6-(beta-hydroxybutyryl)lysine. Residues 112-213 (KAESKAITTK…KPKKAAPKKK (102 aa)) are disordered. The span at 120–144 (TKVSVKAKASGAAKKPKKTAGAAAK) shows a compositional bias: low complexity. Residue lysine 121 is modified to N6-acetyllysine. Composition is skewed to basic residues over residues 145–178 (KTVK…KKVA) and 185–213 (KAVK…PKKK). Phosphothreonine is present on threonine 201.

The protein belongs to the histone H1/H5 family. In terms of assembly, interacts with DFFB. H1 histones are progressively phosphorylated during the cell cycle, becoming maximally phosphorylated during late G2 phase and M phase, and being dephosphorylated sharply thereafter. Post-translationally, citrullination at Arg-56 (H1R54ci) by PADI4 takes place within the DNA-binding site of H1 and results in its displacement from chromatin and global chromatin decondensation, thereby promoting pluripotency and stem cell maintenance. In terms of processing, hydroxybutyrylation of histones is induced by starvation. As to expression, restricted to thymus, testis and spleen. Present also in lymphocytic and neuronal cells. Increases in testis starting with a low level at day 5 and reaching high concentrations in 20-day old and adult animals.

The protein resides in the nucleus. Its subcellular location is the chromosome. Its function is as follows. Histone H1 protein binds to linker DNA between nucleosomes forming the macromolecular structure known as the chromatin fiber. Histones H1 are necessary for the condensation of nucleosome chains into higher-order structured fibers. Also acts as a regulator of individual gene transcription through chromatin remodeling, nucleosome spacing and DNA methylation. This chain is Histone H1.1, found in Mus musculus (Mouse).